We begin with the raw amino-acid sequence, 253 residues long: tRNA (guanine-N(1)-)-methyltransferase (253 aa).

S-adenosyl-L-methionine-binding positions include Gly-110 and 130-135 (IGDYIL).

The protein belongs to the RNA methyltransferase TrmD family. As to quaternary structure, homodimer.

The protein resides in the cytoplasm. The catalysed reaction is guanosine(37) in tRNA + S-adenosyl-L-methionine = N(1)-methylguanosine(37) in tRNA + S-adenosyl-L-homocysteine + H(+). Specifically methylates guanosine-37 in various tRNAs. The polypeptide is tRNA (guanine-N(1)-)-methyltransferase (Carboxydothermus hydrogenoformans (strain ATCC BAA-161 / DSM 6008 / Z-2901)).